Here is a 333-residue protein sequence, read N- to C-terminus: DNA-directed RNA polymerase subunit alpha (333 aa).

Positions 1–246 (MEKFIKINWT…AHLNIIGDVN (246 aa)) are alpha N-terminal domain (alpha-NTD). The interval 263–333 (HSKTQNILIQ…YNVFLDKGEE (71 aa)) is alpha C-terminal domain (alpha-CTD).

Belongs to the RNA polymerase alpha chain family. Homodimer. The RNAP catalytic core consists of 2 alpha, 1 beta, 1 beta' and 1 omega subunit. When a sigma factor is associated with the core the holoenzyme is formed, which can initiate transcription.

The catalysed reaction is RNA(n) + a ribonucleoside 5'-triphosphate = RNA(n+1) + diphosphate. Its function is as follows. DNA-dependent RNA polymerase catalyzes the transcription of DNA into RNA using the four ribonucleoside triphosphates as substrates. The protein is DNA-directed RNA polymerase subunit alpha of Mycoplasma mobile (strain ATCC 43663 / 163K / NCTC 11711) (Mesomycoplasma mobile).